A 347-amino-acid chain; its full sequence is S-adenosylmethionine decarboxylase proenzyme 4 (347 aa).

Residues Glu7 and Glu10 contribute to the active site. Glu66 contacts substrate. Ser67 serves as the catalytic Schiff-base intermediate with substrate; via pyruvic acid. Position 67 is a pyruvic acid (Ser); by autocatalysis (Ser67). Cys81 acts as the Proton donor; for catalytic activity in catalysis. Residues Ser237 and His250 each act as proton acceptor; for processing activity in the active site. Residue Glu254 coordinates substrate.

Belongs to the eukaryotic AdoMetDC family. Pyruvate is required as a cofactor. In terms of processing, is synthesized initially as an inactive proenzyme. Formation of the active enzyme involves a self-maturation process in which the active site pyruvoyl group is generated from an internal serine residue via an autocatalytic post-translational modification. Two non-identical subunits are generated from the proenzyme in this reaction, and the pyruvate is formed at the N-terminus of the alpha chain, which is derived from the carboxyl end of the proenzyme. The post-translation cleavage follows an unusual pathway, termed non-hydrolytic serinolysis, in which the side chain hydroxyl group of the serine supplies its oxygen atom to form the C-terminus of the beta chain, while the remainder of the serine residue undergoes an oxidative deamination to produce ammonia and the pyruvoyl group blocking the N-terminus of the alpha chain.

The enzyme catalyses S-adenosyl-L-methionine + H(+) = S-adenosyl 3-(methylsulfanyl)propylamine + CO2. The protein operates within amine and polyamine biosynthesis; S-adenosylmethioninamine biosynthesis; S-adenosylmethioninamine from S-adenosyl-L-methionine: step 1/1. Essential for biosynthesis of the polyamines spermidine and spermine. Essential for polyamine homeostasis, and normal plant embryogenesis, growth and development. This Arabidopsis thaliana (Mouse-ear cress) protein is S-adenosylmethionine decarboxylase proenzyme 4.